The sequence spans 154 residues: 6,7-dimethyl-8-ribityllumazine synthase (154 aa).

Residues Phe-24, Ser-56–Glu-58, and Ala-80–Val-82 each bind 5-amino-6-(D-ribitylamino)uracil. Glu-85–Thr-86 serves as a coordination point for (2S)-2-hydroxy-3-oxobutyl phosphate. The active-site Proton donor is His-88. Phe-113 contributes to the 5-amino-6-(D-ribitylamino)uracil binding site. Arg-127 is a binding site for (2S)-2-hydroxy-3-oxobutyl phosphate.

The protein belongs to the DMRL synthase family.

It catalyses the reaction (2S)-2-hydroxy-3-oxobutyl phosphate + 5-amino-6-(D-ribitylamino)uracil = 6,7-dimethyl-8-(1-D-ribityl)lumazine + phosphate + 2 H2O + H(+). Its pathway is cofactor biosynthesis; riboflavin biosynthesis; riboflavin from 2-hydroxy-3-oxobutyl phosphate and 5-amino-6-(D-ribitylamino)uracil: step 1/2. Its function is as follows. Catalyzes the formation of 6,7-dimethyl-8-ribityllumazine by condensation of 5-amino-6-(D-ribitylamino)uracil with 3,4-dihydroxy-2-butanone 4-phosphate. This is the penultimate step in the biosynthesis of riboflavin. The polypeptide is 6,7-dimethyl-8-ribityllumazine synthase (Thermococcus gammatolerans (strain DSM 15229 / JCM 11827 / EJ3)).